The primary structure comprises 351 residues: Uroporphyrinogen decarboxylase (351 aa).

Substrate is bound by residues 25 to 29 (RQAGR), D74, Y151, S206, and H325.

The protein belongs to the uroporphyrinogen decarboxylase family. As to quaternary structure, homodimer.

Its subcellular location is the cytoplasm. The enzyme catalyses uroporphyrinogen III + 4 H(+) = coproporphyrinogen III + 4 CO2. It functions in the pathway porphyrin-containing compound metabolism; protoporphyrin-IX biosynthesis; coproporphyrinogen-III from 5-aminolevulinate: step 4/4. Its function is as follows. Catalyzes the decarboxylation of four acetate groups of uroporphyrinogen-III to yield coproporphyrinogen-III. This is Uroporphyrinogen decarboxylase from Chlorobium phaeovibrioides (strain DSM 265 / 1930) (Prosthecochloris vibrioformis (strain DSM 265)).